Consider the following 478-residue polypeptide: GTPase Obg (478 aa).

Positions 2–159 (TTFVDRVELH…QDIHLELKTV (158 aa)) constitute an Obg domain. The disordered stretch occupies residues 60 to 88 (YHHSPHRKATNGKPGEGGNRSGKDGQDLV). Residues 160 to 330 (ADVALVGYPS…LSFALAELVA (171 aa)) form the OBG-type G domain. Residues 166 to 173 (GYPSAGKS), 191 to 195 (FTTLV), 212 to 215 (DVPG), 282 to 285 (NKID), and 311 to 313 (SAV) contribute to the GTP site. Mg(2+) contacts are provided by serine 173 and threonine 193. Residues 348–430 (PKAVDDAGFT…DNAVVFDWEP (83 aa)) form the OCT domain. The disordered stretch occupies residues 438-478 (MLGRRGEDHRFEAPRPAAQRRRDRDAERDEAQQEFDGFEPF). Basic and acidic residues-rich tracts occupy residues 439–450 (LGRRGEDHRFEA) and 457–468 (RRRDRDAERDEA). The segment covering 469–478 (QQEFDGFEPF) has biased composition (acidic residues).

Belongs to the TRAFAC class OBG-HflX-like GTPase superfamily. OBG GTPase family. Monomer. Mg(2+) serves as cofactor.

The protein localises to the cytoplasm. It localises to the cell membrane. In terms of biological role, plays an unknown essential role and a regulatory role in sporulation. Overexpression suppresses sporulation although cell growth rate was not reduced. Impaired differentiation was eliminated by addition of decoyinine, an inhibitor of GMP synthesis. Overexpression has no effect on undecylprodigiosin production, but decreases actinorhodin production. Functionally, an essential GTPase which binds GTP, GDP and possibly (p)ppGpp with moderate affinity, with high nucleotide exchange rates and a fairly low GTP hydrolysis rate. Plays a role in control of the cell cycle, stress response, ribosome biogenesis and in those bacteria that undergo differentiation, in morphogenesis control. The polypeptide is GTPase Obg (Streptomyces coelicolor (strain ATCC BAA-471 / A3(2) / M145)).